Consider the following 253-residue polypeptide: Imidazole glycerol phosphate synthase subunit HisF (253 aa).

Active-site residues include D11 and D130.

This sequence belongs to the HisA/HisF family. In terms of assembly, heterodimer of HisH and HisF.

It is found in the cytoplasm. It catalyses the reaction 5-[(5-phospho-1-deoxy-D-ribulos-1-ylimino)methylamino]-1-(5-phospho-beta-D-ribosyl)imidazole-4-carboxamide + L-glutamine = D-erythro-1-(imidazol-4-yl)glycerol 3-phosphate + 5-amino-1-(5-phospho-beta-D-ribosyl)imidazole-4-carboxamide + L-glutamate + H(+). It functions in the pathway amino-acid biosynthesis; L-histidine biosynthesis; L-histidine from 5-phospho-alpha-D-ribose 1-diphosphate: step 5/9. Functionally, IGPS catalyzes the conversion of PRFAR and glutamine to IGP, AICAR and glutamate. The HisF subunit catalyzes the cyclization activity that produces IGP and AICAR from PRFAR using the ammonia provided by the HisH subunit. The protein is Imidazole glycerol phosphate synthase subunit HisF of Myxococcus xanthus (strain DK1622).